The chain runs to 347 residues: NADH-quinone oxidoreductase subunit H (347 aa).

8 helical membrane-spanning segments follow: residues 21–41 (IAGILLIALPLMLGVAMIIYA), 87–107 (GLFLIAPIITFTVALMAWAVI), 120–140 (VGLLYVLAISSLGVYGVVIAG), 160–180 (ISYEVSIGFILICVVLWAGTF), 194–214 (WIINGFVANPLLFPMWVMFLI), 259–279 (LLMCALNAVLFWGGYLPPLDI), 282–302 (LYLVPGFVWLLLKILFFFFIF), and 324–344 (VFLPVSLLFVFLVSGYLMATG).

It belongs to the complex I subunit 1 family. As to quaternary structure, NDH-1 is composed of 14 different subunits. Subunits NuoA, H, J, K, L, M, N constitute the membrane sector of the complex.

The protein localises to the cell inner membrane. The enzyme catalyses a quinone + NADH + 5 H(+)(in) = a quinol + NAD(+) + 4 H(+)(out). In terms of biological role, NDH-1 shuttles electrons from NADH, via FMN and iron-sulfur (Fe-S) centers, to quinones in the respiratory chain. The immediate electron acceptor for the enzyme in this species is believed to be ubiquinone. Couples the redox reaction to proton translocation (for every two electrons transferred, four hydrogen ions are translocated across the cytoplasmic membrane), and thus conserves the redox energy in a proton gradient. This subunit may bind ubiquinone. In Novosphingobium aromaticivorans (strain ATCC 700278 / DSM 12444 / CCUG 56034 / CIP 105152 / NBRC 16084 / F199), this protein is NADH-quinone oxidoreductase subunit H.